A 1104-amino-acid chain; its full sequence is Valine--tRNA ligase, mitochondrial (1104 aa).

The transit peptide at 1–47 (MNKWLNTLSKTFTFRLLNCHYRRSLPLCQNFSLKKSLTHNQVRFFKM) directs the protein to the mitochondrion. Ser73 bears the Phosphoserine mark. Residues 99-119 (KKNAAATTGASQKKPKKKKEV) form a disordered region. The 'HIGH' region signature appears at 190–200 (PNVTGALHIGH). Ser294 and Ser332 each carry phosphoserine. Residues 703–707 (KMSKS) carry the 'KMSKS' region motif. Lys706 is a binding site for ATP. Ser707 is modified (phosphoserine). Thr1003 bears the Phosphothreonine mark.

This sequence belongs to the class-I aminoacyl-tRNA synthetase family.

It is found in the cytoplasm. The protein resides in the mitochondrion. The catalysed reaction is tRNA(Val) + L-valine + ATP = L-valyl-tRNA(Val) + AMP + diphosphate. The protein is Valine--tRNA ligase, mitochondrial (VAS1) of Saccharomyces cerevisiae (strain ATCC 204508 / S288c) (Baker's yeast).